Here is a 676-residue protein sequence, read N- to C-terminus: Polyunsaturated fatty acid lipoxygenase ALOX15B (676 aa).

Residues 2-124 (AEFRVRVSTG…TLVLQEGTAK (123 aa)) enclose the PLAT domain. The Ca(2+) site is built by Gly15, Gly17, Asp39, Asn40, Gly42, Glu44, Asp85, and Ala86. In terms of domain architecture, Lipoxygenase spans 125–676 (VSWADHHPVL…PPLIENSVSI (552 aa)). Fe cation-binding residues include His373, His378, His553, and Ile676.

This sequence belongs to the lipoxygenase family. The cofactor is Fe cation. Expressed in hair, prostate, lung, ovary, lymph node, spinal cord and cornea.

It is found in the nucleus. It localises to the cytoplasm. Its subcellular location is the cytosol. The protein localises to the cell membrane. The protein resides in the cytoskeleton. It is found in the membrane. It localises to the cell junction. Its subcellular location is the adherens junction. The protein localises to the focal adhesion. The catalysed reaction is (5Z,8Z,11Z,14Z)-eicosatetraenoate + O2 = (15S)-hydroperoxy-(5Z,8Z,11Z,13E)-eicosatetraenoate. It catalyses the reaction (9Z,12Z)-octadecadienoate + O2 = 13-hydroperoxy-(9Z,11E)-octadecadienoate. It carries out the reaction (5S)-hydroxy-(6E,8Z,11Z,14Z)-eicosatetraenoate + O2 = (5S)-hydroxy-(15S)-hydroperoxy-(6E,8Z,11Z,13E)-eicosatetraenoate. The enzyme catalyses (5Z,8Z,11Z,14Z)-eicosatetraenoate + O2 = 5-hydroperoxy-(6E,8Z,11Z,14Z)-eicosatetraenoate. The catalysed reaction is (5S,6R)-dihydroxy-(7E,9E,11Z,14Z)-eicosatetraenoate + O2 = (5S,6R)-dihydroxy-(15S)-hydroperoxy-(7E,9E,11Z,13E)-eicosatetraenoate. It catalyses the reaction (5S)-hydroperoxy-(6E,8Z,11Z,14Z)-eicosatetraenoate + O2 = (5S,15S)-dihydroperoxy-(6E,8Z,11Z,13E)-eicosatetraenoate. It carries out the reaction 2-(5Z,8Z,11Z,14Z-eicosatetraenoyl)-glycerol + O2 = 2-[15(S)-hydroperoxy-(5Z,8Z,11Z,13E)-eicosatetraenoyl]-glycerol. The enzyme catalyses (8S)-hydroperoxy-(5Z,9E,11Z,14Z)-eicosatetraenoate + O2 = (8S,15S)-dihydroperoxy-(5Z,9E,11Z,13E)-eicosatetraenoate. The catalysed reaction is N-(5Z,8Z,11Z,14Z)-eicosatetraenoyl-L-alanine + O2 = N-(15S)-hydroperoxy-(5Z,8Z,11Z,13E)-eicosatetraenoyl-alanine. It catalyses the reaction N-(5Z,8Z,11Z,14Z)-eicosatetraenoyl-gamma-aminobutanoate + O2 = N-(15S)-hydroperoxy-(5Z,8Z,11Z,13E)-eicosatetraenoyl-gamma-aminobutanoate. It carries out the reaction N-(5Z,8Z,11Z,14Z)-eicosatetraenoyl-glycine + O2 = N-(15S)-hydroperoxy-(5Z,8Z,11Z,13E)-eicosatetraenoyl-glycine. The enzyme catalyses N-(5Z,8Z,11Z,14Z)-eicosatetraenoyl-taurine + O2 = N-(15S)-hydroperoxy-(5Z,8Z,11Z,13E)-eicosatetraenoyl-taurine. The catalysed reaction is 2-(5Z,8Z,11Z,14Z-eicosatetraenoyl)-glycerol + O2 = 2-[12-hydroperoxy-(5Z,8Z,10E,14Z)-eicosatetraenoyl]-glycerol. It catalyses the reaction 1-octadecanoyl-2-(5Z,8Z,11Z,14Z-eicosatetraenoyl)-sn-glycero-3-phosphocholine + O2 = 1-octadecanoyl-2-(15-hydroperoxy-5Z,8Z,11Z,13E-eicosatetraenoyl)-sn-glycero-3-phosphocholine. It carries out the reaction a 1-acyl-2-(5Z,8Z,11Z,14Z-eicosatetraenoyl)-sn-glycero-3-phospho-(1D-myo-inositol) + O2 = a 1-acyl-2-(15-hydroperoxy-5Z,8Z,11Z,13E-eicosatetraenoyl)-sn-glycero-3-phospho-(1D-myo-inositol). The enzyme catalyses a 1-acyl-2-(8Z,11Z,14Z-eicosatrienoyl)-sn-glycero-3-phospho-(1D-myo-inositol) + O2 = a 1-acyl-2-(15-hydroperoxy-8Z,11Z,13E-eicosatrienoyl)-sn-glycero-3-phospho-(1D-myo-inositol). The catalysed reaction is 1-octadecanoyl-2-(5Z,8Z,11Z,14Z)-eicosatetraenoyl-sn-glycero-3-phosphoethanolamine + O2 = 1-octadecanoyl-2-(15-hydroperoxy-5Z,8Z,11Z,13E-eicosatetraenoyl)-sn-glycero-3-phosphoethanolamine. It catalyses the reaction 1-octadecanoyl-2-(5Z,8Z,11Z,14Z-eicosatetraenoyl)-sn-glycero-3-phospho-(1D-myo-inositol) + O2 = 1-octadecanoyl-2-(15-hydroperoxy-5Z,8Z,11Z,13E-eicosatetraenoyl)-sn-glycero-3-phospho-(1D-myo-inositol). It carries out the reaction (8Z,11Z,14Z)-eicosatrienoate + O2 = 15-hydroperoxy-(8Z,11Z,13E)-eicosatrienoate. The enzyme catalyses (7S)-hydroperoxy-(4Z,8E,10Z,13Z,16Z,19Z)-docosahexaenoate + O2 = (7S,17S)-dihydroperoxy-(4Z,8E,10Z,13Z,15E,19Z)-docosahexaenoate. The catalysed reaction is (5Z,8Z,11Z,14Z)-eicosatetraenoate + O2 = 15-hydroperoxy-(5Z,8Z,11Z,13E)-eicosatetraenoate. Its pathway is lipid metabolism; hydroperoxy eicosatetraenoic acid biosynthesis. Functionally, non-heme iron-containing dioxygenase that catalyzes the stereo-specific peroxidation of free and esterified polyunsaturated fatty acids (PUFAs) generating a spectrum of bioactive lipid mediators. It inserts peroxyl groups at C15 of arachidonate ((5Z,8Z,11Z,14Z)-eicosatetraenoate) producing (15S)-hydroperoxyeicosatetraenoate/(15S)-HPETE. Also peroxidizes linoleate ((9Z,12Z)-octadecadienoate) to 13-hydroperoxyoctadecadienoate/13-HPODE. Oxygenates arachidonyl derivatives such as 2-arachidonoylglycerol (2-AG) leading to the production and extracellular release of 15-hydroxyeicosatetraenoyl glycerol (15-HETE-G) that acts as a peroxisome proliferator-activated receptor alpha agonist. Has the ability to efficiently class-switch ALOX5 pro-inflammatory mediators into anti-inflammatory intermediates. Participates in the sequential oxidations of DHA ((4Z,7Z,10Z,13Z,16Z,19Z)-docosahexaenoate) to generate specialized pro-resolving mediators (SPMs) resolvin D5 ((7S,17S)-diHPDHA), which can actively down-regulate the immune response and have anti-aggregation properties with platelets. In addition to free PUFAs hydrolyzed from phospholipids, it directly oxidizes PUFAs esterified to membrane-bound phospholipids. Has no detectable 8S-lipoxygenase activity on arachidonate but reacts with (8S)-HPETE to produce (8S,15S)-diHPETE. May regulate progression through the cell cycle and cell proliferation. May also regulate cytokine secretion by macrophages and therefore play a role in the immune response. May also regulate macrophage differentiation into proatherogenic foam cells. In terms of biological role, does not convert arachidonic acid to 15S-hydroperoxyeicosatetraenoic acid/(15S)-HPETE. The protein is Polyunsaturated fatty acid lipoxygenase ALOX15B of Homo sapiens (Human).